A 95-amino-acid polypeptide reads, in one-letter code: Sec-independent protein translocase protein TatA (95 aa).

A helical transmembrane segment spans residues 1-21 (MGGISIWQLLIIALIVVLLFG). Residues 50–61 (KALEDNAADKPA) show a composition bias toward basic and acidic residues. Residues 50 to 95 (KALEDNAADKPAADAAKVTETAKVAETAPVAETAEKKAESKGKEQA) are disordered. The span at 62–81 (ADAAKVTETAKVAETAPVAE) shows a compositional bias: low complexity. Over residues 82–95 (TAEKKAESKGKEQA) the composition is skewed to basic and acidic residues.

The protein belongs to the TatA/E family. The Tat system comprises two distinct complexes: a TatABC complex, containing multiple copies of TatA, TatB and TatC subunits, and a separate TatA complex, containing only TatA subunits. Substrates initially bind to the TatABC complex, which probably triggers association of the separate TatA complex to form the active translocon.

The protein localises to the cell inner membrane. Part of the twin-arginine translocation (Tat) system that transports large folded proteins containing a characteristic twin-arginine motif in their signal peptide across membranes. TatA could form the protein-conducting channel of the Tat system. The protein is Sec-independent protein translocase protein TatA of Shewanella halifaxensis (strain HAW-EB4).